A 311-amino-acid chain; its full sequence is 3'(2'),5'-bisphosphate nucleotidase 1 (311 aa).

The active-site Proton acceptor is the Asp49. Residues Glu72, Asp116, Leu118, and Asp119 each contribute to the Mg(2+) site. The active-site Proton acceptor is Thr121. Residues Thr202, His205, Gly227, and Lys231 each contribute to the AMP site. A Mg(2+)-binding site is contributed by Asp254.

It belongs to the inositol monophosphatase superfamily. Mg(2+) is required as a cofactor.

The enzyme catalyses adenosine 3',5'-bisphosphate + H2O = AMP + phosphate. It carries out the reaction adenosine 2',5'-bisphosphate + H2O = AMP + phosphate. The catalysed reaction is 3'-phosphoadenylyl sulfate + H2O = adenosine 5'-phosphosulfate + phosphate. It catalyses the reaction 1D-myo-inositol 1,4-bisphosphate + H2O = 1D-myo-inositol 4-phosphate + phosphate. The enzyme catalyses 1D-myo-inositol 1,3,4-trisphosphate + H2O = 1D-myo-inositol 3,4-bisphosphate + phosphate. Its activity is regulated as follows. Inhibited by Li(+) and Ca(2+), but not by Na(+). Functionally, phosphatase that converts 3'(2')-phosphoadenosine 5'-phosphate (PAP) to AMP and adenosine 3'-phosphate 5'-phosphosulfate (PAPS) to adenosine 5'-phosphosulfate (APS). Is also able to hydrolyze inositol 1,4-bisphosphate (Ins(1,4)P2) and inositol 1,3,4-trisphosphate (Ins(1,3,4)P3), but is not active on AMP, 3'-AMP, fructose-1,6-bisphosphate, Ins(1)P, Ins(2)P and Ins(1,4,5)P3. Probably prevents the toxic accumulation of PAP, a compound which inhibits a variety of proteins, including PAPS-utilizing enzymes such as sulfotransferases, and RNA processing enzymes. Could also play a role in inositol recycling and phosphoinositide metabolism. The chain is 3'(2'),5'-bisphosphate nucleotidase 1 (bpnt1) from Dictyostelium discoideum (Social amoeba).